The sequence spans 607 residues: T-box transcription factor TBX18 (607 aa).

The Engrailed homology 1 repressor motif lies at 18 to 28 (HAFSVEALIGA). Residues 30 to 141 (KQQQLQKKRR…PLPSPQAPRV (112 aa)) are disordered. A Nuclear localization signal motif is present at residues 36-40 (KKRRK). Residues 44 to 53 (EEAAGAVDDG) are compositionally biased toward low complexity. Residues 143–330 (LQGAELWKRF…RNPFAKGFRD (188 aa)) constitute a DNA-binding region (T-box).

As to quaternary structure, homodimer. Can form a heterodimer with TBX15. Interacts with GATA4 and NKX2-5. Interacts with PAX3. Interacts (via engrailed homology 1 repressor motif) with TLE3; this interaction represses TBX18 transcriptional activity. Interacts with SIX1.

The protein resides in the nucleus. Its function is as follows. Acts as a transcriptional repressor involved in developmental processes of a variety of tissues and organs, including the heart and coronary vessels, the ureter and the vertebral column. Required for embryonic development of the sino atrial node (SAN) head area. This is T-box transcription factor TBX18 (TBX18) from Homo sapiens (Human).